The chain runs to 253 residues: 5'-nucleotidase SurE (253 aa).

A divalent metal cation-binding residues include D8, D9, S40, and N93.

Belongs to the SurE nucleotidase family. A divalent metal cation is required as a cofactor.

It localises to the cytoplasm. It carries out the reaction a ribonucleoside 5'-phosphate + H2O = a ribonucleoside + phosphate. In terms of biological role, nucleotidase that shows phosphatase activity on nucleoside 5'-monophosphates. This is 5'-nucleotidase SurE from Haemophilus ducreyi (strain 35000HP / ATCC 700724).